Consider the following 473-residue polypeptide: MTIKLYNTKTRRKEDFEPINKDDVRMYVCGPTVYDRAHLGNARPVIVFDVLYRLLRHTYGPDHVTYVRNFTDVDDKINARAAESGRSIAEITAETTQWFLDDMAAVGALEPSIKDRDHQRAMPRATQYIAQMVTMIEDLIAKGHAYAAEGHVLFAVESYSKYGALSGRSIDDMIAGARVEVAPYKRNPMDFVLWKPSDDATPGWAGPVVGGKSIGRGRPGWHIECSAMAHDLLGATFDIHGGGNDLMFPHHENEIAQSTCAGHNFANVWMHNEMLQVEGKKMSKSLGNFFTVRDLLDQGVPGEVIRFVMLSTHYRKPMDWTEKKREEAEETLWKWKKLTDGAESSRRPHLEIIAALKDDLNTPLAISILHRKFAEAKSDDDKNRFLSTLLLLGIGETWRDGVDVAVEEAFQTVSLIEALIESIEKARAQKDWATSDRTRDGLESAGVKVQISKDGVSWERGPSFDPAKLEALK.

Residue cysteine 29 coordinates Zn(2+). Positions 31–41 match the 'HIGH' region motif; that stretch reads PTVYDRAHLGN. Residues cysteine 225, histidine 250, and glutamate 254 each coordinate Zn(2+). A 'KMSKS' region motif is present at residues 281-285; that stretch reads KMSKS. Lysine 284 provides a ligand contact to ATP.

It belongs to the class-I aminoacyl-tRNA synthetase family. Monomer. Zn(2+) serves as cofactor.

The protein localises to the cytoplasm. It carries out the reaction tRNA(Cys) + L-cysteine + ATP = L-cysteinyl-tRNA(Cys) + AMP + diphosphate. The sequence is that of Cysteine--tRNA ligase from Roseobacter denitrificans (strain ATCC 33942 / OCh 114) (Erythrobacter sp. (strain OCh 114)).